The primary structure comprises 120 residues: Large ribosomal subunit protein bL19 (120 aa).

Belongs to the bacterial ribosomal protein bL19 family.

Its function is as follows. This protein is located at the 30S-50S ribosomal subunit interface and may play a role in the structure and function of the aminoacyl-tRNA binding site. In Chlorobium chlorochromatii (strain CaD3), this protein is Large ribosomal subunit protein bL19.